A 120-amino-acid polypeptide reads, in one-letter code: MPPKAGQTKKAKMEAANKGAKKTTKKWSKGQSREALQNAVMFDKETYDKLRSEVPKYKLITPSIISDRLKIAVSIAAAGLKQLCREKLIRLVSCSSKTRVYTRIVQAAPAEAAAAAPAAE.

Residues 1–32 (MPPKAGQTKKAKMEAANKGAKKTTKKWSKGQS) are disordered. Residues 19–28 (GAKKTTKKWS) are compositionally biased toward basic residues.

It belongs to the eukaryotic ribosomal protein eS25 family.

The protein is Small ribosomal subunit protein eS25 (RPS25) of Leishmania infantum.